The chain runs to 503 residues: Ribonuclease Y (503 aa).

Residues Gly-2 to Leu-22 form a helical membrane-spanning segment. The KH domain maps to Thr-193–Leu-253. Residues Val-319 to Ser-412 form the HD domain.

Belongs to the RNase Y family.

Its subcellular location is the cell membrane. Endoribonuclease that initiates mRNA decay. This chain is Ribonuclease Y, found in Mesoplasma florum (strain ATCC 33453 / NBRC 100688 / NCTC 11704 / L1) (Acholeplasma florum).